The sequence spans 434 residues: Cobyrinate a,c-diamide synthase (434 aa).

One can recognise a GATase cobBQ-type domain in the interval 240 to 430 (KAYVAYDSAF…SHFHFSRTRR (191 aa)). The active-site Nucleophile is the Cys-322.

It belongs to the CobB/CbiA family. Mg(2+) serves as cofactor.

The enzyme catalyses cob(II)yrinate + 2 L-glutamine + 2 ATP + 2 H2O = cob(II)yrinate a,c diamide + 2 L-glutamate + 2 ADP + 2 phosphate + 2 H(+). The protein operates within cofactor biosynthesis; adenosylcobalamin biosynthesis; cob(II)yrinate a,c-diamide from sirohydrochlorin (anaerobic route): step 10/10. Functionally, catalyzes the ATP-dependent amidation of the two carboxylate groups at positions a and c of cobyrinate, using either L-glutamine or ammonia as the nitrogen source. In Sulfolobus acidocaldarius (strain ATCC 33909 / DSM 639 / JCM 8929 / NBRC 15157 / NCIMB 11770), this protein is Cobyrinate a,c-diamide synthase.